Here is a 273-residue protein sequence, read N- to C-terminus: 2,3,4,5-tetrahydropyridine-2,6-dicarboxylate N-succinyltransferase (273 aa).

The substrate site is built by Arg-104 and Asp-141.

It belongs to the transferase hexapeptide repeat family. As to quaternary structure, homotrimer.

The protein resides in the cytoplasm. It catalyses the reaction (S)-2,3,4,5-tetrahydrodipicolinate + succinyl-CoA + H2O = (S)-2-succinylamino-6-oxoheptanedioate + CoA. It functions in the pathway amino-acid biosynthesis; L-lysine biosynthesis via DAP pathway; LL-2,6-diaminopimelate from (S)-tetrahydrodipicolinate (succinylase route): step 1/3. This Psychrobacter arcticus (strain DSM 17307 / VKM B-2377 / 273-4) protein is 2,3,4,5-tetrahydropyridine-2,6-dicarboxylate N-succinyltransferase.